The sequence spans 96 residues: Putative pterin-4-alpha-carbinolamine dehydratase (96 aa).

The protein belongs to the pterin-4-alpha-carbinolamine dehydratase family.

It carries out the reaction (4aS,6R)-4a-hydroxy-L-erythro-5,6,7,8-tetrahydrobiopterin = (6R)-L-erythro-6,7-dihydrobiopterin + H2O. This Prochlorococcus marinus (strain MIT 9515) protein is Putative pterin-4-alpha-carbinolamine dehydratase.